Reading from the N-terminus, the 286-residue chain is MTFTIMTDSTADLNQTWAEDHDIVLIGLTILCDGEVYETVGPNRISSDYLLKKMKAGSHPQTSQINVGEFEKVFREHARNNKALLYLAFSSVLSGTYQSALMARDLVREDYPDAVIEIVDTLAAAGGEGYLTILAAEARDSGKNLLETKDIVEAVIPRLRTYFLVDDLFHLMRGGRLSKGSAFLGSLASIKPLLWIDEEGKLVPIAKIRGRQKAIKEMVAQVEKDIADSTVIVSYTSDQGSAEKLREELLAHENISDVLMMPLGPVISAHVGPNTLAVFVIGQNSR.

The region spanning 3-282 is the DegV domain; the sequence is FTIMTDSTAD…PNTLAVFVIG (280 aa). Residues T62 and S94 each contribute to the hexadecanoate site.

Its function is as follows. May bind long-chain fatty acids, such as palmitate, and may play a role in lipid transport or fatty acid metabolism. This is DegV domain-containing protein M6_Spy1658 from Streptococcus pyogenes serotype M6 (strain ATCC BAA-946 / MGAS10394).